A 313-amino-acid chain; its full sequence is 18S rRNA aminocarboxypropyltransferase (313 aa).

The segment at 1-30 is disordered; it reads MGKGKNKMHEPKNGRPQRGANGHSSRQNHR. The S-adenosyl-L-methionine site is built by S62, V110, L133, and W148. Basic and acidic residues predominate over residues 215 to 228; sequence KETQERKSRAKEED. The segment at 215 to 313 is disordered; sequence KETQERKSRA…SYDPLGNLIR (99 aa). Polar residues predominate over residues 237-246; the sequence is RRGNGSQSDT. The span at 247 to 257 shows a compositional bias: acidic residues; the sequence is SESEENSEQSD. Phosphoserine is present on residues S286 and S289.

It belongs to the TDD superfamily. TSR3 family.

The protein resides in the cytoplasm. It is found in the nucleus. It catalyses the reaction an N(1)-methylpseudouridine in rRNA + S-adenosyl-L-methionine = N(1)-methyl-N(3)-[(3S)-3-amino-3-carboxypropyl]pseudouridine in rRNA + S-methyl-5'-thioadenosine + H(+). The enzyme catalyses N(1)-methylpseudouridine(1191) in yeast 18S rRNA + S-adenosyl-L-methionine = N(1)-methyl-N(3)-[(3S)-3-amino-3-carboxypropyl]pseudouridine(1191) in yeast 18S rRNA + S-methyl-5'-thioadenosine + H(+). Functionally, aminocarboxypropyltransferase that catalyzes the aminocarboxypropyl transfer on pseudouridine at position 1191 (Psi1191) in 18S rRNA. It constitutes the last step in biosynthesis of the hypermodified N1-methyl-N3-(3-amino-3-carboxypropyl) pseudouridine (m1acp3-Psi) conserved in eukaryotic 18S rRNA. Required for processing 35S pre-rRNA at site D. The protein is 18S rRNA aminocarboxypropyltransferase of Saccharomyces cerevisiae (strain ATCC 204508 / S288c) (Baker's yeast).